Here is a 360-residue protein sequence, read N- to C-terminus: Aminomethyltransferase (360 aa).

It belongs to the GcvT family. The glycine cleavage system is composed of four proteins: P, T, L and H.

It catalyses the reaction N(6)-[(R)-S(8)-aminomethyldihydrolipoyl]-L-lysyl-[protein] + (6S)-5,6,7,8-tetrahydrofolate = N(6)-[(R)-dihydrolipoyl]-L-lysyl-[protein] + (6R)-5,10-methylene-5,6,7,8-tetrahydrofolate + NH4(+). Its function is as follows. The glycine cleavage system catalyzes the degradation of glycine. This is Aminomethyltransferase from Legionella pneumophila (strain Corby).